The primary structure comprises 516 residues: UvrABC system protein C (516 aa).

The GIY-YIG domain maps to H9–I87. In terms of domain architecture, UVR spans G191–L226.

This sequence belongs to the UvrC family. As to quaternary structure, interacts with UvrB in an incision complex.

The protein resides in the cytoplasm. Its function is as follows. The UvrABC repair system catalyzes the recognition and processing of DNA lesions. UvrC both incises the 5' and 3' sides of the lesion. The N-terminal half is responsible for the 3' incision and the C-terminal half is responsible for the 5' incision. This is UvrABC system protein C from Methanosarcina acetivorans (strain ATCC 35395 / DSM 2834 / JCM 12185 / C2A).